Consider the following 463-residue polypeptide: Glutamate--tRNA ligase (463 aa).

A 'HIGH' region motif is present at residues 9–19 (PSPTGYLHVGG). Residues 115–129 (AGEKPRYDGTWRPEA) are compositionally biased toward basic and acidic residues. The interval 115–136 (AGEKPRYDGTWRPEAGKTLPAI) is disordered. The short motif at 241-245 (KLSKR) is the 'KMSKS' region element. ATP is bound at residue Lys-244.

The protein belongs to the class-I aminoacyl-tRNA synthetase family. Glutamate--tRNA ligase type 1 subfamily. As to quaternary structure, monomer.

Its subcellular location is the cytoplasm. The enzyme catalyses tRNA(Glu) + L-glutamate + ATP = L-glutamyl-tRNA(Glu) + AMP + diphosphate. Its function is as follows. Catalyzes the attachment of glutamate to tRNA(Glu) in a two-step reaction: glutamate is first activated by ATP to form Glu-AMP and then transferred to the acceptor end of tRNA(Glu). The protein is Glutamate--tRNA ligase of Janthinobacterium sp. (strain Marseille) (Minibacterium massiliensis).